We begin with the raw amino-acid sequence, 434 residues long: BEN domain-containing protein 7 (434 aa).

Glycyl lysine isopeptide (Lys-Gly) (interchain with G-Cter in SUMO2) cross-links involve residues Lys-16, Lys-56, and Lys-85. Disordered regions lie at residues 96–151 (PQRS…SNGE) and 212–262 (SRKR…ERTS). Polar residues predominate over residues 97–150 (QRSNSSTEASQGLHSNSRGAWNELPTQSGQFSGQSGPRSRTFQTQPHISASSNG). Positions 212-222 (SRKRNKKKKVL) are enriched in basic residues. Lys-244 participates in a covalent cross-link: Glycyl lysine isopeptide (Lys-Gly) (interchain with G-Cter in SUMO2). In terms of domain architecture, BEN spans 289-399 (GFDVFMPKSQ…RRLKRGSAEV (111 aa)). Thr-326 is modified (phosphothreonine). A Phosphoserine modification is found at Ser-330. The interval 414–434 (TGHTFVIKRETPEDPEPGSVA) is disordered.

This chain is BEN domain-containing protein 7 (Bend7), found in Mus musculus (Mouse).